A 129-amino-acid chain; its full sequence is Small ribosomal subunit protein bS6 (129 aa).

Positions 103–129 are disordered; it reads LKQKEERAERAPRREERAEAKPEAAAE. Basic and acidic residues predominate over residues 104 to 129; it reads KQKEERAERAPRREERAEAKPEAAAE.

The protein belongs to the bacterial ribosomal protein bS6 family.

Its function is as follows. Binds together with bS18 to 16S ribosomal RNA. This is Small ribosomal subunit protein bS6 from Vibrio campbellii (strain ATCC BAA-1116).